The sequence spans 315 residues: ATP synthase gamma chain (315 aa).

It belongs to the ATPase gamma chain family. As to quaternary structure, F-type ATPases have 2 components, CF(1) - the catalytic core - and CF(0) - the membrane proton channel. CF(1) has five subunits: alpha(3), beta(3), gamma(1), delta(1), epsilon(1). CF(0) has three main subunits: a, b and c.

Its subcellular location is the cellular thylakoid membrane. Its function is as follows. Produces ATP from ADP in the presence of a proton gradient across the membrane. The gamma chain is believed to be important in regulating ATPase activity and the flow of protons through the CF(0) complex. The chain is ATP synthase gamma chain from Synechococcus sp. (strain RCC307).